The sequence spans 130 residues: MIGNWNYGTGRRKSAVARVFIKAGKGDIIVNGKPIADYFSRETSLMIVRQPLELTNHGQTFDIKVNVNGGGETGQAGAVRHGITRALIDYDATLKPSLSNAGFVTRDAREVERKKVGLRKARRAKQFSKR.

The protein belongs to the universal ribosomal protein uS9 family.

This Burkholderia vietnamiensis (strain G4 / LMG 22486) (Burkholderia cepacia (strain R1808)) protein is Small ribosomal subunit protein uS9.